The primary structure comprises 104 residues: Guanyl-specific ribonuclease Ap1 (104 aa).

2 disulfide bridges follow: Cys2–Cys10 and Cys6–Cys103. Residue His40 is part of the active site. Residue Glu58 is the Proton acceptor of the active site. Residue His92 is the Proton donor of the active site.

It belongs to the ribonuclease N1/T1 family.

It localises to the secreted. It carries out the reaction [RNA] containing guanosine + H2O = an [RNA fragment]-3'-guanosine-3'-phosphate + a 5'-hydroxy-ribonucleotide-3'-[RNA fragment].. The polypeptide is Guanyl-specific ribonuclease Ap1 (Aspergillus pallidus).